We begin with the raw amino-acid sequence, 685 residues long: Putative alpha-1,3-mannosyltransferase MNN14 (685 aa).

Over 1-13 the chain is Cytoplasmic; the sequence is MGLLSIPYQSKSK. Residues 14–34 traverse the membrane as a helical segment; sequence LWIAIFLVVWSLISMHFIWQS. The Lumenal portion of the chain corresponds to 35–685; the sequence is QANSGLILKN…EIWMRGYNYL (651 aa). N-linked (GlcNAc...) asparagine glycans are attached at residues N199, N338, N408, and N556.

This sequence belongs to the MNN1/MNT family.

It is found in the golgi apparatus membrane. It participates in protein modification; protein glycosylation. Its function is as follows. Responsible for addition of the terminal mannose residues to the outer chain of core N-linked polysaccharides and to O-linked mannotriose. Implicated in late Golgi modifications. Involved in virulence. This chain is Putative alpha-1,3-mannosyltransferase MNN14 (MNN14), found in Candida albicans (strain SC5314 / ATCC MYA-2876) (Yeast).